A 139-amino-acid polypeptide reads, in one-letter code: Histone H2AX (139 aa).

2 disordered regions span residues 1–21 and 119–139; these read MSGRGKAVSKTRAKAKTRSSR and KKSSGGVSTSGKKSSQQSQEY. Ser-2 carries the N-acetylserine modification. Residue Ser-2 is modified to Phosphoserine. Over residues 7–19 the composition is skewed to basic residues; it reads AVSKTRAKAKTRS. Position 10 is an N6-lactoyllysine; alternate (Lys-10). Residues Lys-14, Lys-16, and Lys-120 each participate in a glycyl lysine isopeptide (Lys-Gly) (interchain with G-Cter in ubiquitin) cross-link. Ser-136 is modified (phosphoserine). The [ST]-Q motif signature appears at 136–137; that stretch reads SQ. Tyr-139 carries the post-translational modification Phosphotyrosine; by WSTF.

The protein belongs to the histone H2A family. The nucleosome is a histone octamer containing two molecules each of H2A, H2B, H3 and H4 assembled in one H3-H4 heterotetramer and two H2A-H2B heterodimers. The octamer wraps approximately 147 bp of DNA. Interacts with numerous proteins required for DNA damage signaling and repair when phosphorylated on Ser-136. In terms of processing, phosphorylated. Phosphorylation of Ser-136 (H2AX139ph) occurs in response to DNA double strand breaks (DSBs) generated by exogenous genotoxic agents, by stalled replication forks and by meiotic recombination events. Phosphorylation is dependent on the DNA damage checkpoint kinases ATR and ATM, spreads on either side of a detected DSB site and may mark the surrounding chromatin for recruitment of proteins required for DNA damage signaling and repair. Widespread phosphorylation may also serve to amplify the damage signal or aid repair of persistent lesions. Dephosphorylation of Ser-136 is required for DNA DSB repair. Phosphorylation at Tyr-139 (H2AXY142ph) by baz1b/wstf determines the relative recruitment of either DNA repair or pro-apoptotic factors. Phosphorylation at Tyr-139 (H2AXY142ph) favors the recruitment of pro-apoptosis factors. In contrast, dephosphorylation of Tyr-139 by EYA proteins (eya1, eya2, eya3 or eya4) favors the recruitment of MDC1-containing DNA repair complexes to the tail of phosphorylated Ser-136 (H2AX139ph). Phosphorylated by VRK1. Monoubiquitination of Lys-120 (H2AXK119ub) by ring1 and rnf2/ring2 complex gives a specific tag for epigenetic transcriptional repression. Following DNA double-strand breaks (DSBs), it is ubiquitinated through 'Lys-63' linkage of ubiquitin moieties by the E2 ligase ube2n and the E3 ligases rnf8 and rnf168, leading to the recruitment of repair proteins to sites of DNA damage. Ubiquitination at Lys-14 and Lys-16 (H2AK13Ub and H2AK15Ub, respectively) in response to DNA damage is initiated by rnf168 that mediates monoubiquitination at these 2 sites, and 'Lys-63'-linked ubiquitin are then conjugated to monoubiquitin; rnf8 is able to extend 'Lys-63'-linked ubiquitin chains in vitro. H2AK119Ub and ionizing radiation-induced 'Lys-63'-linked ubiquitination (H2AK13Ub and H2AK15Ub) are distinct events.

The protein resides in the nucleus. It localises to the chromosome. Functionally, variant histone H2A which replaces conventional H2A in a subset of nucleosomes. Nucleosomes wrap and compact DNA into chromatin, limiting DNA accessibility to the cellular machineries which require DNA as a template. Histones thereby play a central role in transcription regulation, DNA repair, DNA replication and chromosomal stability. DNA accessibility is regulated via a complex set of post-translational modifications of histones, also called histone code, and nucleosome remodeling. Required for checkpoint-mediated arrest of cell cycle progression in response to low doses of ionizing radiation and for efficient repair of DNA double strand breaks (DSBs) specifically when modified by C-terminal phosphorylation. This Xenopus laevis (African clawed frog) protein is Histone H2AX (h2ax).